The chain runs to 454 residues: MKVVKFGGSSLASGAQLDKVFHIVTSDPARKAVVVSAPGKHYAEDTKVTDLLIACAEQYLATGSAPELAEAVVERYALIANELQLGQSIIEKIRDDLFTLLEGDKSNPEQYLDAVKASGEDNNAKLIAAYFRYKGVKAEYVNPKDAGLFVTNEPGNAQVLPESYQNLYRLRERDGLIIFPGFFGFSKDGDVITFSRSGSDITGSILANGLQADLYENFTDVDAVYSVNPSFVENPKEISELTYREMRELSYAGFSVFHDEALIPAFRAGIPVQIKNTNNPSAEGTRVVSKRDNTNGPVVGIASDTGFCSIYISKYLMNREIGFGRRALQILEEHGLTYEHVPSGIDDMTIILRQGQMDAATERSVIKRIEEDLHADEVIVEHHLALIMVVGEAMRHNVGTTARAAKALSEAQVNIEMINQGSSEVSMMFGVKEAEERKAVQALYQEFFAGVLIS.

ACT domains lie at 312 to 388 and 389 to 454; these read ISKY…ALIM and VVGE…VLIS.

The protein belongs to the aspartokinase family. As to quaternary structure, monomer.

It carries out the reaction L-aspartate + ATP = 4-phospho-L-aspartate + ADP. The protein operates within amino-acid biosynthesis; L-lysine biosynthesis via DAP pathway; (S)-tetrahydrodipicolinate from L-aspartate: step 1/4. Its pathway is amino-acid biosynthesis; L-methionine biosynthesis via de novo pathway; L-homoserine from L-aspartate: step 1/3. It functions in the pathway amino-acid biosynthesis; L-threonine biosynthesis; L-threonine from L-aspartate: step 1/5. Catalyzes the phosphorylation of the beta-carboxyl group of aspartic acid with ATP to yield 4-phospho-L-aspartate, which is involved in the branched biosynthetic pathway leading to the biosynthesis of amino acids threonine, isoleucine and methionine. The sequence is that of Aspartokinase 3 (yclM) from Bacillus subtilis (strain 168).